The following is a 181-amino-acid chain: dTDP-4-dehydrorhamnose 3,5-epimerase (181 aa).

Substrate-binding positions include Arg-23, Glu-28, 47-49 (QDN), and Arg-59. The active-site Proton acceptor is the His-62. Substrate is bound by residues Lys-72 and His-119. Tyr-132 serves as the catalytic Proton donor. The substrate site is built by Glu-143 and Lys-167.

This sequence belongs to the dTDP-4-dehydrorhamnose 3,5-epimerase family. As to quaternary structure, homodimer.

The enzyme catalyses dTDP-4-dehydro-6-deoxy-alpha-D-glucose = dTDP-4-dehydro-beta-L-rhamnose. It participates in carbohydrate biosynthesis; dTDP-L-rhamnose biosynthesis. The protein operates within bacterial outer membrane biogenesis; LPS O-antigen biosynthesis. Its function is as follows. Catalyzes the epimerization of the C3' and C5'positions of dTDP-6-deoxy-D-xylo-4-hexulose, forming dTDP-6-deoxy-L-lyxo-4-hexulose. This chain is dTDP-4-dehydrorhamnose 3,5-epimerase (rfbC), found in Shigella flexneri.